The sequence spans 164 residues: Dehydrin Rab16B (164 aa).

The interval 1–164 (MENYQGQHGY…KIKEKLPGQH (164 aa)) is disordered. The span at 25–53 (GQYGGGATAPGGGHGAMGMGGHAGAGAGG) shows a compositional bias: gly residues. A compositionally biased stretch (low complexity) spans 107-117 (GNNQQQQQMMG). The span at 147–164 (GEKKGFMDKIKEKLPGQH) shows a compositional bias: basic and acidic residues.

The protein belongs to the plant dehydrin family.

In Oryza sativa subsp. indica (Rice), this protein is Dehydrin Rab16B (RAB16B).